The primary structure comprises 321 residues: Phosphatidate cytidylyltransferase, mitochondrial (321 aa).

The protein belongs to the TAM41 family. It depends on Mg(2+) as a cofactor. Co(2+) serves as cofactor. The cofactor is Cu(2+).

The protein localises to the mitochondrion inner membrane. The catalysed reaction is a 1,2-diacyl-sn-glycero-3-phosphate + CTP + H(+) = a CDP-1,2-diacyl-sn-glycerol + diphosphate. It participates in phospholipid metabolism; CDP-diacylglycerol biosynthesis; CDP-diacylglycerol from sn-glycerol 3-phosphate: step 3/3. Its function is as follows. Catalyzes the formation of CDP-diacylglycerol (CDP-DAG) from phosphatidic acid (PA) in the mitochondrial inner membrane. Required for the biosynthesis of the dimeric phospholipid cardiolipin, which stabilizes supercomplexes of the mitochondrial respiratory chain in the mitochondrial inner membrane. The sequence is that of Phosphatidate cytidylyltransferase, mitochondrial from Caenorhabditis elegans.